We begin with the raw amino-acid sequence, 309 residues long: Calcium homeostasis modulator protein 5 (309 aa).

At 1–15 (MDAFQGILKFFLNQK) the chain is on the cytoplasmic side. Lysine 15, arginine 32, and valine 37 together coordinate a 1,2-diacyl-sn-glycero-3-phosphate. The chain crosses the membrane as a helical span at residues 16–37 (TVIGYSFMALLTVGSERLFSVV). Topologically, residues 38-45 (AFKCPCST) are extracellular. Intrachain disulfides connect cysteine 41–cysteine 127, cysteine 43–cysteine 158, and cysteine 142–cysteine 149. A helical membrane pass occupies residues 46 to 70 (ENMTYGLVFLFAPAWVLLILGFFLN). The Cytoplasmic segment spans residues 71-99 (NRSWRLFTGCCVNPRKIFPRGHSCRFFYV). The chain crosses the membrane as a helical span at residues 100-129 (LGQITLSSLVAPVMWLSVALLNGTFYECAM). The a 1,2-diacyl-sn-glycero-3-phosphate site is built by glutamine 102 and asparagine 121. Residues 130-174 (SGTRSSGLLELICKGKPKECWEELHKVSCGKTSMLPTVNEELKLS) lie on the Extracellular side of the membrane. Residues 175 to 200 (LQAQSQILGWCLICSASFFSLLTTCY) traverse the membrane as a helical segment. Over 201–309 (ARCRSKVSYL…MVLVGTAHNM (109 aa)) the chain is Cytoplasmic. Residue arginine 202 coordinates a 1,2-diacyl-sn-glycero-3-phosphate.

This sequence belongs to the CALHM family. As to quaternary structure, oligomerizes to form undecameric cone-shaped channels.

The protein resides in the membrane. In terms of biological role, may assemble to form large pore channels with gating and ion conductance likely regulated by membrane lipids. The chain is Calcium homeostasis modulator protein 5 from Homo sapiens (Human).